Reading from the N-terminus, the 158-residue chain is Transcription elongation factor GreA (158 aa).

The stretch at 45 to 72 (AEYHAAREQQSFIEGRIKQLEGELSHAE) forms a coiled coil.

The protein belongs to the GreA/GreB family.

Its function is as follows. Necessary for efficient RNA polymerase transcription elongation past template-encoded arresting sites. The arresting sites in DNA have the property of trapping a certain fraction of elongating RNA polymerases that pass through, resulting in locked ternary complexes. Cleavage of the nascent transcript by cleavage factors such as GreA or GreB allows the resumption of elongation from the new 3'terminus. GreA releases sequences of 2 to 3 nucleotides. The sequence is that of Transcription elongation factor GreA from Xylella fastidiosa (strain M12).